Consider the following 139-residue polypeptide: Transcription initiation factor IIA small chain homolog (139 aa).

The interval 113–139 is disordered; that stretch reads LSAQGPSKRVNRAHAAAAGDDEDDDSD.

It belongs to the TFIIA subunit 2 family.

The protein localises to the nucleus. This is Transcription initiation factor IIA small chain homolog from Caenorhabditis elegans.